The sequence spans 120 residues: Large ribosomal subunit protein bL19 (120 aa).

It belongs to the bacterial ribosomal protein bL19 family.

This protein is located at the 30S-50S ribosomal subunit interface and may play a role in the structure and function of the aminoacyl-tRNA binding site. This chain is Large ribosomal subunit protein bL19, found in Nostoc punctiforme (strain ATCC 29133 / PCC 73102).